The primary structure comprises 389 residues: S-adenosylmethionine synthase (389 aa).

H18 lines the ATP pocket. D20 is a Mg(2+) binding site. E46 contacts K(+). 2 residues coordinate L-methionine: E59 and Q103. A flexible loop region spans residues Q103 to S113. ATP contacts are provided by residues D168–K170, D244, R250–K251, A267, and K271. D244 serves as a coordination point for L-methionine. K275 is a binding site for L-methionine.

It belongs to the AdoMet synthase family. As to quaternary structure, homotetramer; dimer of dimers. Requires Mg(2+) as cofactor. K(+) is required as a cofactor.

It is found in the cytoplasm. The enzyme catalyses L-methionine + ATP + H2O = S-adenosyl-L-methionine + phosphate + diphosphate. The protein operates within amino-acid biosynthesis; S-adenosyl-L-methionine biosynthesis; S-adenosyl-L-methionine from L-methionine: step 1/1. Functionally, catalyzes the formation of S-adenosylmethionine (AdoMet) from methionine and ATP. The overall synthetic reaction is composed of two sequential steps, AdoMet formation and the subsequent tripolyphosphate hydrolysis which occurs prior to release of AdoMet from the enzyme. The protein is S-adenosylmethionine synthase of Pelagibacter ubique (strain HTCC1062).